The chain runs to 109 residues: Flagellar hook-basal body complex protein FliE (109 aa).

Residues 1–38 form a disordered region; it reads MQAIHNDKSLLSPFSELNTDNRTKREESGSTFKEQKGG. The span at 19-38 shows a compositional bias: basic and acidic residues; sequence TDNRTKREESGSTFKEQKGG.

The protein belongs to the FliE family.

Its subcellular location is the bacterial flagellum basal body. This chain is Flagellar hook-basal body complex protein FliE, found in Helicobacter pylori (strain P12).